A 2211-amino-acid polypeptide reads, in one-letter code: Nonribosomal peptide synthetase 13 (2211 aa).

The tract at residues 76–475 (TYAELDSLSD…IEHHLQLTLP (400 aa)) is adenylation 1. The region spanning 594–671 (PPSTPKEATI…EQSKRAGLIQ (78 aa)) is the Carrier 1 domain. Ser-631 is modified (O-(pantetheine 4'-phosphoryl)serine). Positions 710-975 (EDIYPCTALQ…IATVPTRIRV (266 aa)) are condensation 1. Residues 1169-1563 (TYRELWAHSS…LGAVEASVMR (395 aa)) are adenylation 2. Positions 1677–1756 (PMSDDNERRL…RSRHLITEQA (80 aa)) constitute a Carrier 2 domain. Ser-1714 is subject to O-(pantetheine 4'-phosphoryl)serine. The condensation 2 stretch occupies residues 1814–2069 (HFQFDLSGAV…CTNYIPYRLS (256 aa)).

This sequence belongs to the NRP synthetase family.

It carries out the reaction L-proline + L-tryptophan + 2 ATP = brevianamide F + 2 AMP + 2 diphosphate + 2 H(+). The protein operates within mycotoxin biosynthesis. Nonribosomal peptide synthetase; part of the gene cluster that mediates the biosynthesis of fumitremorgins, indole alkaloids that carry not only intriguing chemical structures, but also interesting biological and pharmacological activities. The biosynthesis of fumitremorgin-type alkaloids begins by condensation of the two amino acids L-tryptophan and L-proline to brevianamide F, catalyzed by the non-ribosomal peptide synthetase ftmA. Brevianamide F is then prenylated by the prenyltransferase ftmPT1/ftmB in the presence of dimethylallyl diphosphate, resulting in the formation of tryprostatin B. The three cytochrome P450 monooxygenases, ftmP450-1/ftmC, ftmP450-2/ftmE and ftmP450-3/FtmG, are responsible for the conversion of tryprostatin B to 6-hydroxytryprostatin B, tryprostatin A to fumitremorgin C and fumitremorgin C to 12,13-dihydroxyfumitremorgin C, respectively. The putative methyltransferase ftmMT/ftmD is expected for the conversion of 6-hydroxytryprostatin B to tryprostatin A. FtmPT2/FtmH catalyzes the prenylation of 12,13-dihydroxyfumitre-morgin C in the presence of dimethylallyl diphosphate, resulting in the formation of fumitremorgin B. Fumitremorgin B is further converted to verruculogen by ftmOx1/ftmF via the insertion of an endoperoxide bond between the two prenyl moieties. In some fungal species, verruculogen is further converted to fumitremorgin A, but the enzymes involved in this step have not been identified yet. This is Nonribosomal peptide synthetase 13 from Aspergillus fumigatus (Neosartorya fumigata).